The chain runs to 94 residues: Alpha-conotoxin Ms20.3 (94 aa).

The N-terminal stretch at methionine 1–glycine 24 is a signal peptide. A propeptide spanning residues glutamine 25–arginine 45 is cleaved from the precursor. Glutamate 49 carries the 4-carboxyglutamate modification. Position 55 is a 4-hydroxyproline (proline 55). 4 disulfides stabilise this stretch: cysteine 63–cysteine 72, cysteine 68–cysteine 80, cysteine 73–cysteine 90, and cysteine 78–cysteine 92.

The protein belongs to the conotoxin D superfamily. In terms of assembly, hetero-, homo- or pseudo-homodimer (identical sequence, different post-translational modifications). Homodimer of [carboxyGlu-49, hydroxyPro-55]Ms20.3, and heterodimer of [carboxyGlu-49, hydroxyPro-55]Ms20.3 and [carboxy'Glu-50', hydroxy'Pro-56']Ms20.5 may exist. As to expression, expressed by the venom duct.

It is found in the secreted. Alpha-D-conopeptides act on postsynaptic membranes, they bind to the nicotinic acetylcholine receptors (nAChR) and thus inhibit them. Through its two C-terminal domains, this homodimeric protein would bind to two nAChR allosteric sites, located outside the nAChR C-loop of the principal binding face and at the adjacent binding interface in a clockwise direction. This toxin specifically blocks mammalian neuronal nAChR of the alpha-7/CHRNA7 (IC(50)=0.12 nM), alpha-3-beta-2/CHRNA3-CHRNB2 (IC(50)=1.08 nM), and alpha-4-beta-2/CHRNA4-CHRNB2 (IC(50)=4.5 nM) subtypes. Has no effect on alpha-3-beta-4/CHRNA3-CHRNB4, alpha-4-beta-4/CHRNA4-CHRNB4 and alpha-1-beta-1-epsilon-delta/CHRNA1-CHRNB1-CHRNE-CHRND subtypes of nAChRs. The polypeptide is Alpha-conotoxin Ms20.3 (Conus mustelinus (Weasel cone)).